The chain runs to 368 residues: Guanylate binding protein 128up (368 aa).

Lysine 22 is subject to (3S)-3-hydroxylysine. The 226-residue stretch at 65 to 290 (ARVGFVGFPS…LLELMWEYLR (226 aa)) folds into the OBG-type G domain. GTP is bound by residues 71-78 (GFPSVGKS), 117-121 (DLPGI), and 248-251 (NKID). One can recognise a TGS domain in the interval 290 to 366 (RLQRIYTKPK…NDEDVVQIVK (77 aa)).

It belongs to the TRAFAC class OBG-HflX-like GTPase superfamily. OBG GTPase family. Post-translationally, hydroxylated (with S stereochemistry) at C-3 of Lys-22 by JMJD7. Expressed in posterior-lateral epidermis of the maxillary lobe.

Functionally, catalyzes the conversion of GTP to GDP through hydrolysis of the gamma-phosphate bond in GTP. Dfd/deformed is required to activate 128up in maxillary segment cells. This Drosophila melanogaster (Fruit fly) protein is Guanylate binding protein 128up.